The primary structure comprises 185 residues: Ribosome-recycling factor (185 aa).

It belongs to the RRF family.

It localises to the cytoplasm. In terms of biological role, responsible for the release of ribosomes from messenger RNA at the termination of protein biosynthesis. May increase the efficiency of translation by recycling ribosomes from one round of translation to another. This Yersinia pseudotuberculosis serotype O:1b (strain IP 31758) protein is Ribosome-recycling factor.